Consider the following 278-residue polypeptide: Large ribosomal subunit protein uL2 (278 aa).

Disordered regions lie at residues 33-53 and 219-278; these read LTEG…TSRG and LTRG…KKKR. Positions 269-278 are enriched in basic residues; sequence IRSRHAKKKR.

This sequence belongs to the universal ribosomal protein uL2 family. Part of the 50S ribosomal subunit. Forms a bridge to the 30S subunit in the 70S ribosome.

Functionally, one of the primary rRNA binding proteins. Required for association of the 30S and 50S subunits to form the 70S ribosome, for tRNA binding and peptide bond formation. It has been suggested to have peptidyltransferase activity; this is somewhat controversial. Makes several contacts with the 16S rRNA in the 70S ribosome. In Sphingopyxis alaskensis (strain DSM 13593 / LMG 18877 / RB2256) (Sphingomonas alaskensis), this protein is Large ribosomal subunit protein uL2.